Consider the following 891-residue polypeptide: von Willebrand factor A domain-containing protein 7 (891 aa).

The signal sequence occupies residues 1 to 28; it reads MLPTEVPQSHPGPSALLLLQLLLPPTSA. The N-linked (GlcNAc...) asparagine glycan is linked to Asn-55. Residues 237-272 are disordered; sequence PKPPGKCSHGGHFDRSSSQPPRGGINKDSTSPGFSP. The 194-residue stretch at 313–506 folds into the VWFA domain; sequence ASSLSFVLDT…SMAALVTLPL (194 aa).

In terms of tissue distribution, expressed at low level in different cell lines.

The protein localises to the secreted. The protein is von Willebrand factor A domain-containing protein 7 (VWA7) of Homo sapiens (Human).